Here is a 240-residue protein sequence, read N- to C-terminus: Ribonuclease HII (240 aa).

One can recognise an RNase H type-2 domain in the interval 27–226; sequence GPVAGVDEAG…GETRSLRLED (200 aa). Aspartate 33, glutamate 34, and aspartate 127 together coordinate a divalent metal cation.

The protein belongs to the RNase HII family. The cofactor is Mn(2+). Mg(2+) serves as cofactor.

The protein resides in the cytoplasm. It catalyses the reaction Endonucleolytic cleavage to 5'-phosphomonoester.. Endonuclease that specifically degrades the RNA of RNA-DNA hybrids. The chain is Ribonuclease HII from Parafrankia sp. (strain EAN1pec).